A 556-amino-acid chain; its full sequence is Bifunctional methyltransferase (556 aa).

The segment at 1–310 (MQYSIQKFLN…NRVIEISLIQ (310 aa)) is RF MTase. S-adenosyl-L-methionine contacts are provided by residues 148–152 (GTGSG), Asp171, Trp200, and Asn215. Residue 215 to 218 (NPPY) participates in substrate binding. Residues 313–556 (RSYARRIGKS…IITKIPPKSY (244 aa)) are tRNA MTase. Positions 348-399 (KNYNSCKIKSNYTKFNLEKSKESVSRGAERIKIREHLRTYKEDVANFSSSTS) are insert. S-adenosyl-L-methionine-binding residues include Glu403, Glu428, Asn455, and Asp477. Asp477 is an active-site residue. Substrate-binding residues include Lys481 and Asp513.

This sequence in the C-terminal section; belongs to the class I-like SAM-binding methyltransferase superfamily. TrmB family. In the N-terminal section; belongs to the protein N5-glutamine methyltransferase family. PrmC subfamily.

The enzyme catalyses L-glutaminyl-[peptide chain release factor] + S-adenosyl-L-methionine = N(5)-methyl-L-glutaminyl-[peptide chain release factor] + S-adenosyl-L-homocysteine + H(+). It catalyses the reaction guanosine(46) in tRNA + S-adenosyl-L-methionine = N(7)-methylguanosine(46) in tRNA + S-adenosyl-L-homocysteine. Functionally, methylates the class 1 translation termination release factors RF1/PrfA and RF2/PrfB on the glutamine residue of the universally conserved GGQ motif. Its function is as follows. Catalyzes the formation of N(7)-methylguanine at position 46 (m7G46) in tRNA. This Rickettsia bellii (strain RML369-C) protein is Bifunctional methyltransferase (prmC/trmB).